A 445-amino-acid chain; its full sequence is 23S rRNA (uracil(1939)-C(5))-methyltransferase RlmD (445 aa).

A disordered region spans residues 1–21 (MARRRKQLPETPEPASIETLS). Residues 5 to 64 (RKQLPETPEPASIETLSHDGRGIARRDGKTTFIDNALPGEEVMFKFTYMRRKFDEGKAVE) enclose the TRAM domain. Residues Cys77, Cys83, Cys86, and Cys165 each contribute to the [4Fe-4S] cluster site. Residues Gln275, Phe304, Asn309, Glu325, Asp352, and Asp373 each contribute to the S-adenosyl-L-methionine site. The active-site Nucleophile is Cys399.

This sequence belongs to the class I-like SAM-binding methyltransferase superfamily. RNA M5U methyltransferase family. RlmD subfamily.

It catalyses the reaction uridine(1939) in 23S rRNA + S-adenosyl-L-methionine = 5-methyluridine(1939) in 23S rRNA + S-adenosyl-L-homocysteine + H(+). Catalyzes the formation of 5-methyl-uridine at position 1939 (m5U1939) in 23S rRNA. The protein is 23S rRNA (uracil(1939)-C(5))-methyltransferase RlmD of Alcanivorax borkumensis (strain ATCC 700651 / DSM 11573 / NCIMB 13689 / SK2).